Reading from the N-terminus, the 246-residue chain is 1-(5-phosphoribosyl)-5-[(5-phosphoribosylamino)methylideneamino] imidazole-4-carboxamide isomerase (246 aa).

The Proton acceptor role is filled by Asp-8. Asp-131 acts as the Proton donor in catalysis.

This sequence belongs to the HisA/HisF family.

It is found in the cytoplasm. The enzyme catalyses 1-(5-phospho-beta-D-ribosyl)-5-[(5-phospho-beta-D-ribosylamino)methylideneamino]imidazole-4-carboxamide = 5-[(5-phospho-1-deoxy-D-ribulos-1-ylimino)methylamino]-1-(5-phospho-beta-D-ribosyl)imidazole-4-carboxamide. It functions in the pathway amino-acid biosynthesis; L-histidine biosynthesis; L-histidine from 5-phospho-alpha-D-ribose 1-diphosphate: step 4/9. The chain is 1-(5-phosphoribosyl)-5-[(5-phosphoribosylamino)methylideneamino] imidazole-4-carboxamide isomerase from Albidiferax ferrireducens (strain ATCC BAA-621 / DSM 15236 / T118) (Rhodoferax ferrireducens).